The primary structure comprises 519 residues: Signal transduction histidine-protein kinase/phosphatase MprB (519 aa).

Residues 1-26 (MVRFAWRRRASLRATSSLSLRWRVML) are Cytoplasmic-facing. Residues 27 to 47 (LAMSMVAMVVVLMAFAVYVVI) traverse the membrane as a helical segment. Over 48–163 (SAALYSDIDN…PTEAVMTKLR (116 aa)) the chain is Extracellular. The helical transmembrane segment at 164-184 (WVLLIVGSLGVAVAAVAGGMV) threads the bilayer. Over 185 to 519 (TRAGLRPVGR…SVDYQSARAR (335 aa)) the chain is Cytoplasmic. The 53-residue stretch at 186 to 238 (RAGLRPVGRLTEAAERVARTDDLRPIPVFGSDELARLTEAFNLMLRALAESRE) folds into the HAMP domain. One can recognise a Histidine kinase domain in the interval 246-466 (DAGHELRTPL…SIYVLLPGRP (221 aa)). Position 249 is a phosphohistidine; by autocatalysis (histidine 249).

Requires Mg(2+) as cofactor. It depends on Mn(2+) as a cofactor. In terms of processing, autophosphorylated.

Its subcellular location is the cell membrane. The enzyme catalyses ATP + protein L-histidine = ADP + protein N-phospho-L-histidine.. Member of the two-component regulatory system MprB/MprA which contributes to maintaining a balance among several systems involved in stress resistance and is required for establishment and maintenance of persistent infection in the host. In response to environmental signals MprB acts both as a membrane-associated protein kinase that undergoes autophosphorylation and subsequently transfers the phosphate to MprA, and a protein phosphatase that dephosphorylates phospho-MprA. This is Signal transduction histidine-protein kinase/phosphatase MprB (mprB) from Mycobacterium leprae (strain TN).